The primary structure comprises 159 residues: Ribosomal RNA large subunit methyltransferase H (159 aa).

S-adenosyl-L-methionine-binding positions include leucine 76, glycine 108, and 127-132 (FGRMTY).

Belongs to the RNA methyltransferase RlmH family. Homodimer.

The protein localises to the cytoplasm. It carries out the reaction pseudouridine(1915) in 23S rRNA + S-adenosyl-L-methionine = N(3)-methylpseudouridine(1915) in 23S rRNA + S-adenosyl-L-homocysteine + H(+). Its function is as follows. Specifically methylates the pseudouridine at position 1915 (m3Psi1915) in 23S rRNA. The chain is Ribosomal RNA large subunit methyltransferase H from Carboxydothermus hydrogenoformans (strain ATCC BAA-161 / DSM 6008 / Z-2901).